A 400-amino-acid polypeptide reads, in one-letter code: Enoyl-[acyl-carrier-protein] reductase [NADH] (400 aa).

NAD(+) contacts are provided by residues 48–53 (GSSSGY), 74–75 (FE), 111–112 (DA), and 139–140 (LA). Substrate is bound at residue tyrosine 225. Tyrosine 235 functions as the Proton donor in the catalytic mechanism. Residues lysine 244 and 273-275 (VVT) each bind NAD(+).

It belongs to the TER reductase family. In terms of assembly, monomer.

The enzyme catalyses a 2,3-saturated acyl-[ACP] + NAD(+) = a (2E)-enoyl-[ACP] + NADH + H(+). It functions in the pathway lipid metabolism; fatty acid biosynthesis. In terms of biological role, involved in the final reduction of the elongation cycle of fatty acid synthesis (FAS II). Catalyzes the reduction of a carbon-carbon double bond in an enoyl moiety that is covalently linked to an acyl carrier protein (ACP). This is Enoyl-[acyl-carrier-protein] reductase [NADH] from Shewanella oneidensis (strain ATCC 700550 / JCM 31522 / CIP 106686 / LMG 19005 / NCIMB 14063 / MR-1).